A 623-amino-acid chain; its full sequence is Glutathione import ATP-binding protein GsiA (623 aa).

ABC transporter domains lie at 15–269 and 314–564; these read VENL…RALL and LRVR…RKLL. Residues 49-56 and 357-364 each bind ATP; these read GESGSGKS.

Belongs to the ABC transporter superfamily. Glutathione importer (TC 3.A.1.5.11) family. As to quaternary structure, the complex is composed of two ATP-binding proteins (GsiA), two transmembrane proteins (GsiC and GsiD) and a solute-binding protein (GsiB).

The protein localises to the cell inner membrane. The catalysed reaction is glutathione(out) + ATP + H2O = glutathione(in) + ADP + phosphate + H(+). Its function is as follows. Part of the ABC transporter complex GsiABCD involved in glutathione import. Responsible for energy coupling to the transport system. The polypeptide is Glutathione import ATP-binding protein GsiA (Escherichia coli O6:H1 (strain CFT073 / ATCC 700928 / UPEC)).